A 669-amino-acid chain; its full sequence is 5-taurinomethyluridine-[tRNA] synthase subunit MTO1, mitochondrial (669 aa).

The N-terminal 25 residues, 1 to 25 (MFLLRGRGHWAAASLGRRLPLRRLR), are a transit peptide targeting the mitochondrion. FAD is bound by residues 42-47 (GGGHAG), Val154, Ser217, and Gln406. Position 507 is an N6-methyllysine (Lys507).

Belongs to the MnmG family. As to quaternary structure, homodimer; forms a dimer in the presence of potassium. Interacts with GTPBP3; forms the GTPBP3-MTO1 complex composed of homodimers of GTPBP3 and MTO1. The cofactor is FAD. In terms of tissue distribution, ubiquitously expressed in various tissues, but with markedly elevated expression in tissues of high metabolic rates.

It localises to the mitochondrion. The enzyme catalyses 5,10-methylenetetrahydrofolate + uridine(34) in tRNA + taurine + GTP + A + H2O = 5-taurinomethyluridine(34) in tRNA + 7,8-dihydrofolate + GDP + AH2 + phosphate + H(+). Its function is as follows. Component of the GTPBP3-MTO1 complex that catalyzes the 5-taurinomethyluridine (taum(5)U) modification at the 34th wobble position (U34) of mitochondrial tRNAs (mt-tRNAs), which plays a role in mt-tRNA decoding and mitochondrial translation. Taum(5)U formation on mammalian mt-tRNA requires the presence of both GTPBP3-mediated GTPase activity and MTO1 catalytic activity. The sequence is that of 5-taurinomethyluridine-[tRNA] synthase subunit MTO1, mitochondrial from Mus musculus (Mouse).